The following is a 178-amino-acid chain: Cytochrome b6-f complex iron-sulfur subunit (178 aa).

Residues 20 to 42 form a helical membrane-spanning segment; the sequence is LLTFGSVTGVALGALYPVVNYFI. A Rieske domain is found at 65 to 161; the sequence is ASGWLADHKE…VNVENDNVFV (97 aa). Residues Cys-107, His-109, Cys-125, and His-128 each contribute to the [2Fe-2S] cluster site. Cys-112 and Cys-127 are joined by a disulfide.

Belongs to the Rieske iron-sulfur protein family. The 4 large subunits of the cytochrome b6-f complex are cytochrome b6, subunit IV (17 kDa polypeptide, PetD), cytochrome f and the Rieske protein, while the 4 small subunits are PetG, PetL, PetM and PetN. The complex functions as a dimer. Requires [2Fe-2S] cluster as cofactor.

Its subcellular location is the cellular thylakoid membrane. It catalyses the reaction 2 oxidized [plastocyanin] + a plastoquinol + 2 H(+)(in) = 2 reduced [plastocyanin] + a plastoquinone + 4 H(+)(out). Functionally, component of the cytochrome b6-f complex, which mediates electron transfer between photosystem II (PSII) and photosystem I (PSI), cyclic electron flow around PSI, and state transitions. This chain is Cytochrome b6-f complex iron-sulfur subunit, found in Synechococcus sp. (strain RCC307).